Reading from the N-terminus, the 118-residue chain is Waprin-Enh1 (118 aa).

The signal sequence occupies residues 1-24; the sequence is MKTLTGLLLVGLLALWIGLPSTSS. WAP domains lie at 25-72 and 74-118; these read KILF…RSCR and PPVL…RICK. Disulfide bonds link Cys-30/Cys-63, Cys-40/Cys-67, Cys-50/Cys-62, Cys-56/Cys-71, Cys-81/Cys-109, Cys-88/Cys-113, Cys-96/Cys-108, and Cys-102/Cys-117.

The protein belongs to the venom waprin family. Expressed by the venom gland.

The protein resides in the secreted. Damages membranes of susceptible bacteria. Has no hemolytic activity. Not toxic to mice. Does not inhibit the proteinases elastase and cathepsin G. This is Waprin-Enh1 from Pseudoferania polylepis (Macleay's water snake).